An 839-amino-acid polypeptide reads, in one-letter code: AMP deaminase (839 aa).

Residues 8-28 (LALAALFGASFVAVSGFFMHF) traverse the membrane as a helical segment. Positions 40 to 167 (ERKENPDGDE…DDDDNLTNSE (128 aa)) are disordered. A compositionally biased stretch (gly residues) spans 85–94 (DGGGGGGGDT). A phosphoserine mark is found at S134 and S140. Over residues 153 to 162 (SVEESDDDDN) the composition is skewed to acidic residues. S203 bears the Phosphoserine mark. Residue 289–296 (AHYPQGKS) participates in ATP binding. Positions 391 and 393 each coordinate Zn(2+). Residues H393 and 462 to 467 (KFNLKY) contribute to the substrate site. H659 is a Zn(2+) binding site. E662 provides a ligand contact to substrate. Catalysis depends on H681, which acts as the Proton acceptor. D736 contributes to the Zn(2+) binding site. Substrate is bound at residue 737-740 (DPLQ).

Belongs to the metallo-dependent hydrolases superfamily. Adenosine and AMP deaminases family. In terms of assembly, homodimer. Interacts with AHK4. Interacts with EER5. The cofactor is Zn(2+). In terms of tissue distribution, expressed in seedlings, roots, leaves, flowers, pollen grains, pollen tubes and siliques, and at a lower level in stems.

The protein resides in the membrane. It localises to the microsome membrane. It catalyses the reaction AMP + H2O + H(+) = IMP + NH4(+). The protein operates within purine metabolism; IMP biosynthesis via salvage pathway; IMP from AMP: step 1/1. With respect to regulation, activated by ATP. Activated by sulfate ions (in vitro). Inhibited by phosphate ions. In terms of biological role, AMP deaminase plays a critical role in energy metabolism. Essential for the transition from zygote to embryo. The sequence is that of AMP deaminase from Arabidopsis thaliana (Mouse-ear cress).